We begin with the raw amino-acid sequence, 129 residues long: Profilin-4 (129 aa).

This sequence belongs to the profilin family. In terms of tissue distribution, expressed in testis, in seminiferous tubules (at protein level). Expressed in spermatocytes and spermatids, but not in spermatogonium.

The protein resides in the cytoplasm. Its function is as follows. Involved in male fertility. Required for manchette development and acrosome biogenesis during spermiogenesis. Binds in vitro to phospholipids, including phosphatidylinositol 3-phosphate (PtdIns(3)P), phosphatidylinositol 4,5-bisphosphate (PtdIns(4,5)P2), phosphatidylinositol 4-phosphate (PtdIns(4)P) and phosphatidic acid (PA). Contrary to other profilin family members, does not bind to actin in vitro. This chain is Profilin-4 (Pfn4), found in Rattus norvegicus (Rat).